A 223-amino-acid chain; its full sequence is DnaJ homolog subfamily B member 9 (223 aa).

The N-terminal stretch at 1-23 (MATPQSIFIFAICILMITELILA) is a signal peptide. In terms of domain architecture, J spans 26 to 90 (SYYDILGVPK…NRRKEYDTLG (65 aa)). The tract at residues 91-223 (HSAFTNGKGQ…VTTYTDCSGQ (133 aa)) is divergent targeting domain. At Ser-133 the chain carries Phosphoserine.

Interacts with HSPA5/BiP; interaction is direct. Interacts with ERN1/IRE1 (via the luminal region). Interacts with DERL1.

The protein resides in the endoplasmic reticulum lumen. Functionally, co-chaperone for Hsp70 protein HSPA5/BiP that acts as a key repressor of the ERN1/IRE1-mediated unfolded protein response (UPR). J domain-containing co-chaperones stimulate the ATPase activity of Hsp70 proteins and are required for efficient substrate recognition by Hsp70 proteins. In the unstressed endoplasmic reticulum, interacts with the luminal region of ERN1/IRE1 and selectively recruits HSPA5/BiP: HSPA5/BiP disrupts the dimerization of the active ERN1/IRE1 luminal region, thereby inactivating ERN1/IRE1. Also involved in endoplasmic reticulum-associated degradation (ERAD) of misfolded proteins. Required for survival of B-cell progenitors and normal antibody production. This Pongo abelii (Sumatran orangutan) protein is DnaJ homolog subfamily B member 9.